The sequence spans 89 residues: Large ribosomal subunit protein bL27 (89 aa).

The interval Met1 to Leu21 is disordered.

This sequence belongs to the bacterial ribosomal protein bL27 family.

This is Large ribosomal subunit protein bL27 from Granulibacter bethesdensis (strain ATCC BAA-1260 / CGDNIH1).